Reading from the N-terminus, the 396-residue chain is 1-deoxy-D-xylulose 5-phosphate reductoisomerase (396 aa).

NADPH is bound by residues Thr15, Gly16, Ser17, Ile18, Gly41, and Asn129. Lys130 provides a ligand contact to 1-deoxy-D-xylulose 5-phosphate. Glu131 lines the NADPH pocket. Asp155 contacts Mn(2+). 1-deoxy-D-xylulose 5-phosphate contacts are provided by Ser156, Glu157, Ser182, and His205. A Mn(2+)-binding site is contributed by Glu157. Residue Gly211 participates in NADPH binding. Ser218, Asn223, Lys224, and Glu227 together coordinate 1-deoxy-D-xylulose 5-phosphate. Glu227 provides a ligand contact to Mn(2+).

Belongs to the DXR family. Mg(2+) serves as cofactor. Requires Mn(2+) as cofactor.

The catalysed reaction is 2-C-methyl-D-erythritol 4-phosphate + NADP(+) = 1-deoxy-D-xylulose 5-phosphate + NADPH + H(+). It participates in isoprenoid biosynthesis; isopentenyl diphosphate biosynthesis via DXP pathway; isopentenyl diphosphate from 1-deoxy-D-xylulose 5-phosphate: step 1/6. Catalyzes the NADPH-dependent rearrangement and reduction of 1-deoxy-D-xylulose-5-phosphate (DXP) to 2-C-methyl-D-erythritol 4-phosphate (MEP). This is 1-deoxy-D-xylulose 5-phosphate reductoisomerase from Xanthomonas campestris pv. campestris (strain B100).